A 106-amino-acid chain; its full sequence is Trp operon repressor homolog (106 aa).

Residues 59–82 (QREIQQILNTSAATITRGSNMIKI) mediate DNA binding.

Belongs to the TrpR family. As to quaternary structure, homodimer.

The protein resides in the cytoplasm. Functionally, this protein is an aporepressor. When complexed with L-tryptophan it binds the operator region of the trp operon and prevents the initiation of transcription. This chain is Trp operon repressor homolog, found in Histophilus somni (strain 2336) (Haemophilus somnus).